The chain runs to 230 residues: Uracil-DNA glycosylase (230 aa).

The active-site Proton acceptor is the D65.

The protein belongs to the uracil-DNA glycosylase (UDG) superfamily. UNG family.

It localises to the cytoplasm. It carries out the reaction Hydrolyzes single-stranded DNA or mismatched double-stranded DNA and polynucleotides, releasing free uracil.. Functionally, excises uracil residues from the DNA which can arise as a result of misincorporation of dUMP residues by DNA polymerase or due to deamination of cytosine. In Pediococcus pentosaceus (strain ATCC 25745 / CCUG 21536 / LMG 10740 / 183-1w), this protein is Uracil-DNA glycosylase.